The sequence spans 85 residues: Large ribosomal subunit protein bL31B (85 aa).

This sequence belongs to the bacterial ribosomal protein bL31 family. Type B subfamily. In terms of assembly, part of the 50S ribosomal subunit.

The chain is Large ribosomal subunit protein bL31B from Aliivibrio salmonicida (strain LFI1238) (Vibrio salmonicida (strain LFI1238)).